The primary structure comprises 394 residues: Protein TsgA homolog (394 aa).

Helical transmembrane passes span 11-31, 51-71, 76-96, 101-121, 134-154, 160-180, 206-226, 246-266, 274-294, 297-317, 334-354, and 363-383; these read WISF…GMVM, FLNT…EIIP, LVFG…GHNL, ACMF…TFLI, LLFT…IAAT, VAWY…FILT, IGVL…LGFI, GLVS…SVAL, IVTV…SSQQ, MLSM…TTLI, FILT…GPIV, and LATA…LGFV.

It belongs to the major facilitator superfamily. TsgA family.

It is found in the cell inner membrane. This is Protein TsgA homolog from Edwardsiella ictaluri (strain 93-146).